Consider the following 93-residue polypeptide: UPF0473 protein CHY_0543 (93 aa).

This sequence belongs to the UPF0473 family.

The sequence is that of UPF0473 protein CHY_0543 from Carboxydothermus hydrogenoformans (strain ATCC BAA-161 / DSM 6008 / Z-2901).